Consider the following 182-residue polypeptide: Sec-independent protein translocase protein TatB (182 aa).

Residues 1-21 (MFDIGFSELLLVFVIGLIVLG) form a helical membrane-spanning segment. Disordered stretches follow at residues 88-107 (AAESMKRTYSANDPEQASDE) and 121-182 (TQHE…SDKP). Over residues 168–182 (AAPVVESSPSSSDKP) the composition is skewed to low complexity.

The protein belongs to the TatB family. The Tat system comprises two distinct complexes: a TatABC complex, containing multiple copies of TatA, TatB and TatC subunits, and a separate TatA complex, containing only TatA subunits. Substrates initially bind to the TatABC complex, which probably triggers association of the separate TatA complex to form the active translocon.

The protein resides in the cell inner membrane. Functionally, part of the twin-arginine translocation (Tat) system that transports large folded proteins containing a characteristic twin-arginine motif in their signal peptide across membranes. Together with TatC, TatB is part of a receptor directly interacting with Tat signal peptides. TatB may form an oligomeric binding site that transiently accommodates folded Tat precursor proteins before their translocation. The polypeptide is Sec-independent protein translocase protein TatB (Salmonella typhi).